Here is a 480-residue protein sequence, read N- to C-terminus: F-box only protein 3 (480 aa).

The F-box domain occupies 10 to 56 (LLTLESLPTDPLLLILSFVDYRDLINCCYVSRRLSQLSTHDPLWRRH). Positions 278 to 408 (VATTGDITVS…FHMACPTFRV (131 aa)) constitute an ApaG domain. A compositionally biased stretch (acidic residues) spans 419–459 (EYEEMEEEAEEEEEEENDDSADMDESDESDEDENESDEGEG). A disordered region spans residues 419-464 (EYEEMEEEAEEEEEEENDDSADMDESDESDEDENESDEGEGEERRR).

In terms of assembly, part of a SCF (SKP1-cullin-F-box) protein ligase complex SCF(FBXO3) consisting of FBXO3, SKP1, CUL1 and RBX1. Interacts with PML, interaction is direct and takes place either alone or within the SCF complex.

It localises to the nucleus. It participates in protein modification; protein ubiquitination. Its function is as follows. Substrate recognition component of the SCF (SKP1-CUL1-F-box protein)-type E3 ubiquitin ligase complex, SCF(FBXO3), which mediates the ubiquitination and subsequent proteasomal degradation of target proteins. Mediates the ubiquitination of HIPK2 and probably that of EP300, leading to rapid degradation by the proteasome. In the presence of PML, HIPK2 ubiquitination still occurs, but degradation is prevented. PML, HIPK2 and FBXO3 may act synergically to activate p53/TP53-dependent transactivation. The SCF(FBXO3) also acts as a regulator of inflammation by mediating ubiquitination and degradation of FBXL2 in response to lipopolysaccharide (LPS). The SCF(FBXO3) complex specifically recognizes FBXL2 phosphorylated at 'Thr-404' and promotes its ubiquitination. The chain is F-box only protein 3 (Fbxo3) from Rattus norvegicus (Rat).